The following is a 249-amino-acid chain: Secretion system apparatus lipoprotein SsaJ (249 aa).

An N-terminal signal peptide occupies residues 1–18; it reads MKVHRIVFLTVLTFFLTA. A lipid anchor (N-palmitoyl cysteine) is attached at Cys-19. Residue Cys-19 is the site of S-diacylglycerol cysteine attachment. A helical transmembrane segment spans residues 225 to 245; that stretch reads LMLSLTGLLLGVGILIGYFCL.

Belongs to the YscJ lipoprotein family.

The protein localises to the cell outer membrane. In terms of biological role, component of Salmonella pathogenicity island 2 (SPI-2) type III secretion system, required for secretion of some type III-secreted effectors including the SpvB exotoxin. The polypeptide is Secretion system apparatus lipoprotein SsaJ (ssaJ) (Salmonella typhimurium (strain 14028s / SGSC 2262)).